Reading from the N-terminus, the 245-residue chain is Ribosomal RNA small subunit methyltransferase J (245 aa).

S-adenosyl-L-methionine is bound by residues 94-95, 110-111, and D164; these read RD and ER.

Belongs to the methyltransferase superfamily. RsmJ family.

Its subcellular location is the cytoplasm. It catalyses the reaction guanosine(1516) in 16S rRNA + S-adenosyl-L-methionine = N(2)-methylguanosine(1516) in 16S rRNA + S-adenosyl-L-homocysteine + H(+). Its function is as follows. Specifically methylates the guanosine in position 1516 of 16S rRNA. The sequence is that of Ribosomal RNA small subunit methyltransferase J from Dechloromonas aromatica (strain RCB).